Consider the following 429-residue polypeptide: Ribosomal RNA small subunit methyltransferase B (429 aa).

S-adenosyl-L-methionine is bound by residues 254 to 260 (CAAPGGK), Asp277, Asp303, and Asp322. Catalysis depends on Cys375, which acts as the Nucleophile.

Belongs to the class I-like SAM-binding methyltransferase superfamily. RsmB/NOP family.

Its subcellular location is the cytoplasm. The enzyme catalyses cytidine(967) in 16S rRNA + S-adenosyl-L-methionine = 5-methylcytidine(967) in 16S rRNA + S-adenosyl-L-homocysteine + H(+). Its function is as follows. Specifically methylates the cytosine at position 967 (m5C967) of 16S rRNA. The sequence is that of Ribosomal RNA small subunit methyltransferase B from Salmonella arizonae (strain ATCC BAA-731 / CDC346-86 / RSK2980).